The sequence spans 241 residues: Putative CRISPR-associated endoribonuclease-like protein Cas6 (241 aa).

Belongs to the CRISPR-associated protein Cas6/Cse3/CasE family. In terms of assembly, binds crRNA.

Its function is as follows. CRISPR (clustered regularly interspaced short palindromic repeat), is an adaptive immune system that provides protection against mobile genetic elements (viruses, transposable elements and conjugative plasmids). CRISPR clusters contain sequences complementary to antecedent mobile elements and target invading nucleic acids. CRISPR clusters are transcribed and processed into CRISPR RNA (crRNA), also called psiRNA (prokaryotic silencing) in this organism (Potential). In Pyrococcus furiosus (strain ATCC 43587 / DSM 3638 / JCM 8422 / Vc1), this protein is Putative CRISPR-associated endoribonuclease-like protein Cas6 (cas6b).